The chain runs to 97 residues: U-reduvitoxin-Pr11a (97 aa).

The signal sequence occupies residues 1 to 20 (MKTALFLVFALAFIAVEGKM). Pacifastin domains are found at residues 22-59 (RACSKPGQTVLAPDGCNHCRCSEKGILMACTKMMCPPR) and 62-97 (EKSCKPGTTFKHKDGCNTCKCSDDGKNALCTSKLCL). Disulfide bonds link cysteine 24-cysteine 42, cysteine 37-cysteine 56, and cysteine 40-cysteine 51. The interval 57-59 (PPR) is pro-Pro-Arg motif necessary for proteolytic processing. Intrachain disulfides connect cysteine 65–cysteine 82, cysteine 77–cysteine 96, and cysteine 80–cysteine 91.

The protein belongs to the protease inhibitor I19 family. As to expression, expressed by the venom gland.

The protein localises to the secreted. Functionally, inhibits trypsin activity and prophenoloxidase (PPO) activation, an enzyme essential for both clotting and insect innate immune responses. It does not inhibit activity of chymotrypsin and protease K, and has no effect on phenoloxidase (PO) activity. The chain is U-reduvitoxin-Pr11a from Platymeris rhadamanthus (Red spot assassin bug).